The chain runs to 156 residues: Small ribosomal subunit protein uS7 (156 aa).

This sequence belongs to the universal ribosomal protein uS7 family. As to quaternary structure, part of the 30S ribosomal subunit. Contacts proteins S9 and S11.

Its function is as follows. One of the primary rRNA binding proteins, it binds directly to 16S rRNA where it nucleates assembly of the head domain of the 30S subunit. Is located at the subunit interface close to the decoding center, probably blocks exit of the E-site tRNA. The polypeptide is Small ribosomal subunit protein uS7 (Thiobacillus denitrificans (strain ATCC 25259 / T1)).